Here is a 334-residue protein sequence, read N- to C-terminus: Nucleoid-associated protein PFL_1060 (334 aa).

The protein belongs to the YejK family.

Its subcellular location is the cytoplasm. It localises to the nucleoid. The sequence is that of Nucleoid-associated protein PFL_1060 from Pseudomonas fluorescens (strain ATCC BAA-477 / NRRL B-23932 / Pf-5).